A 687-amino-acid chain; its full sequence is Guanine-nucleotide exchange factor YEL1 (687 aa).

Residues Tyr-14–Glu-27 show a composition bias toward polar residues. 2 disordered regions span residues Tyr-14–Ser-35 and Ala-63–Asn-97. An SEC7 domain is found at Ile-57–Thr-264. A compositionally biased stretch (low complexity) spans Thr-73 to Thr-83. At Thr-290 the chain carries Phosphothreonine. Ser-293 and Ser-299 each carry phosphoserine. Residues Ala-412–Ile-551 form the PH domain.

Belongs to the YEL1 family.

The protein resides in the cytoplasm. It localises to the cell membrane. It is found in the bud neck. Its subcellular location is the bud tip. Functionally, guanine nucleotide exchange factor for ARF3 required for localization of ARF3 to the bud neck and tip and involved in actin patch polarization. The sequence is that of Guanine-nucleotide exchange factor YEL1 (YEL1) from Saccharomyces cerevisiae (strain RM11-1a) (Baker's yeast).